The following is a 185-amino-acid chain: Elongation factor P (185 aa).

Belongs to the elongation factor P family.

The protein resides in the cytoplasm. It functions in the pathway protein biosynthesis; polypeptide chain elongation. Its function is as follows. Involved in peptide bond synthesis. Stimulates efficient translation and peptide-bond synthesis on native or reconstituted 70S ribosomes in vitro. Probably functions indirectly by altering the affinity of the ribosome for aminoacyl-tRNA, thus increasing their reactivity as acceptors for peptidyl transferase. The sequence is that of Elongation factor P from Paraburkholderia phymatum (strain DSM 17167 / CIP 108236 / LMG 21445 / STM815) (Burkholderia phymatum).